The sequence spans 142 residues: Baculoviral IAP repeat-containing protein 5 (142 aa).

A BIR repeat occupies 18-88 (RISTFKNWPF…KHSSGCAFLS (71 aa)). Phosphoserine; by AURKC is present on serine 20. Lysine 23 carries the post-translational modification N6-acetyllysine. Threonine 34 is subject to Phosphothreonine; by CDK1 and CDK15. Threonine 48 bears the Phosphothreonine mark. Cysteine 57, cysteine 60, histidine 77, and cysteine 84 together coordinate Zn(2+). An N6-acetyllysine mark is found at lysine 90, lysine 110, lysine 112, and lysine 115. The residue at position 117 (threonine 117) is a Phosphothreonine; by AURKB. Lysine 129 carries the N6-acetyllysine modification.

This sequence belongs to the IAP family. As to quaternary structure, monomer or homodimer. Exists as a homodimer in the apo state and as a monomer in the CPC-bound state. The monomer protects cells against apoptosis more efficiently than the dimer. Only the dimeric form is capable of enhancing tubulin stability in cells. When phosphorylated, interacts with LAMTOR5/HBXIP; the resulting complex binds pro-CASP9, as well as active CASP9, but much less efficiently. Component of the chromosomal passenger complex (CPC) composed of at least BIRC5/survivin, CDCA8/borealin, INCENP, AURKB or AURKC; in the complex forms a triple-helix bundle-based subcomplex with INCENP and CDCA8. Interacts with JTB. Interacts (via BIR domain) with histone H3 phosphorylated at 'Thr-3' (H3pT3). Interacts with EVI5. Interacts with GTP-bound RAN in both the S and M phases of the cell cycle. Interacts with USP9X. Interacts with tubulin. Interacts with BIRC2/c-IAP1. The acetylated form at Lys-129 interacts with STAT3. The monomeric form deacetylated at Lys-129 interacts with XPO1/CRM1. The monomeric form interacts with XIAP/BIRC4. Both the dimeric and monomeric form can interact with DIABLO/SMAC. Interacts with BIRC6/bruce. Interacts with FBXL7; this interaction facilitates the polyubiquitination and subsequent proteasomal degradation of BIRC5 by the SCF(FBXL7) E3 ubiquitin-protein ligase complex. Ubiquitinated by the Cul9-RING ubiquitin-protein ligase complex, leading to its degradation. Ubiquitination is required for centrosomal targeting. Deubiquitinated by USP35 or USP38; leading to stabilization. In terms of processing, acetylation at Lys-129 results in its homodimerization, while deacetylation promotes the formation of monomers which heterodimerize with XPO1/CRM1 which facilitates its nuclear export. The acetylated form represses STAT3 transactivation. The dynamic equilibrium between its acetylation and deacetylation at Lys-129 determines its interaction with XPO1/CRM1, its subsequent subcellular localization, and its ability to inhibit STAT3 transactivation. Post-translationally, in vitro phosphorylation at Thr-117 by AURKB prevents interaction with INCENP and localization to mitotic chromosomes. Phosphorylation at Thr-48 by CK2 is critical for its mitotic and anti-apoptotic activities. Phosphorylation at Thr-34 by CDK15 is critical for its anti-apoptotic activity. Phosphorylation at Ser-20 by AURKC is critical for regulation of proper chromosome alignment and segregation, and possibly cytokinesis.

The protein localises to the cytoplasm. It localises to the nucleus. Its subcellular location is the chromosome. It is found in the centromere. The protein resides in the cytoskeleton. The protein localises to the spindle. It localises to the kinetochore. Its subcellular location is the midbody. Multitasking protein that has dual roles in promoting cell proliferation and preventing apoptosis. Component of a chromosome passage protein complex (CPC) which is essential for chromosome alignment and segregation during mitosis and cytokinesis. Acts as an important regulator of the localization of this complex; directs CPC movement to different locations from the inner centromere during prometaphase to midbody during cytokinesis and participates in the organization of the center spindle by associating with polymerized microtubules. Involved in the recruitment of CPC to centromeres during early mitosis via association with histone H3 phosphorylated at 'Thr-3' (H3pT3) during mitosis. The complex with RAN plays a role in mitotic spindle formation by serving as a physical scaffold to help deliver the RAN effector molecule TPX2 to microtubules. May counteract a default induction of apoptosis in G2/M phase. The acetylated form represses STAT3 transactivation of target gene promoters. May play a role in neoplasia. Inhibitor of CASP3 and CASP7. Essential for the maintenance of mitochondrial integrity and function. This Sus scrofa (Pig) protein is Baculoviral IAP repeat-containing protein 5 (BIRC5).